A 359-amino-acid chain; its full sequence is Alanine racemase (359 aa).

The active-site Proton acceptor; specific for D-alanine is the Lys-34. Lys-34 bears the N6-(pyridoxal phosphate)lysine mark. A substrate-binding site is contributed by Arg-129. Residue Tyr-256 is the Proton acceptor; specific for L-alanine of the active site. Met-304 provides a ligand contact to substrate.

This sequence belongs to the alanine racemase family. The cofactor is pyridoxal 5'-phosphate.

It carries out the reaction L-alanine = D-alanine. It participates in amino-acid biosynthesis; D-alanine biosynthesis; D-alanine from L-alanine: step 1/1. In terms of biological role, catalyzes the interconversion of L-alanine and D-alanine. May also act on other amino acids. This is Alanine racemase (alr) from Photobacterium profundum (strain SS9).